A 279-amino-acid chain; its full sequence is Tryptophan synthase alpha chain (279 aa).

Catalysis depends on proton acceptor residues Glu50 and Asp61.

Belongs to the TrpA family. Tetramer of two alpha and two beta chains.

It carries out the reaction (1S,2R)-1-C-(indol-3-yl)glycerol 3-phosphate + L-serine = D-glyceraldehyde 3-phosphate + L-tryptophan + H2O. It functions in the pathway amino-acid biosynthesis; L-tryptophan biosynthesis; L-tryptophan from chorismate: step 5/5. Functionally, the alpha subunit is responsible for the aldol cleavage of indoleglycerol phosphate to indole and glyceraldehyde 3-phosphate. The sequence is that of Tryptophan synthase alpha chain from Rhizobium etli (strain ATCC 51251 / DSM 11541 / JCM 21823 / NBRC 15573 / CFN 42).